Consider the following 362-residue polypeptide: Very-long-chain (3R)-3-hydroxyacyl-CoA dehydratase 3 (362 aa).

The residue at position 1 (M1) is an N-acetylmethionine. Over 1–149 the chain is Cytoplasmic; that stretch reads MENQVLTPHV…ETLTSLKKGY (149 aa). In terms of domain architecture, CS spans 5-94; the sequence is VLTPHVYWAQ…KESQWWERLT (90 aa). Position 7 is a phosphothreonine (T7). Positions 111 to 136 form a coiled coil; that stretch reads LDESDAEMELRAKEEEQLNKLRLESQ. Phosphoserine is present on residues S114 and S135. A helical membrane pass occupies residues 150–170; sequence LFMYNLVQFLGFSWIFVNMTV. Topologically, residues 171–189 are lumenal; sequence RFFILGKESFYDTFHTVAD. Residues 190 to 210 traverse the membrane as a helical segment; it reads MMYFCQMLAAVESINAAIGVT. The Cytoplasmic portion of the chain corresponds to 211-212; the sequence is KS. Residues 213–233 form a helical membrane-spanning segment; that stretch reads PVVPSLFQLLGRNFILFIIFG. Over 234–242 the chain is Lumenal; the sequence is TMEEMQNKA. A helical transmembrane segment spans residues 243–263; the sequence is VVFFVFYIWSTVEIFRYPFYM. Over 264-280 the chain is Cytoplasmic; sequence LSCIDMDWKVLTWLRYT. Residues 281-301 traverse the membrane as a helical segment; that stretch reads VWIPLYPMGCLAEAVSVIQSI. Residues Y286 and E293 contribute to the active site. The Lumenal portion of the chain corresponds to 302–325; sequence PVFNETGRFSFTLPYPVKIKVRFS. A helical transmembrane segment spans residues 326-346; that stretch reads FFLQIYLILLFLGLYVNFRYL. The Cytoplasmic segment spans residues 347-362; sequence YKQRRRRFGQKKKKIH.

Belongs to the very long-chain fatty acids dehydratase HACD family. May interact with enzymes of the ELO family (including ELOVL1); with those enzymes that mediate condensation, the first of the four steps of the reaction cycle responsible for fatty acids elongation, may be part of a larger fatty acids elongase complex. Interacts with RAC1. Associates with internalized insulin receptor/INSR complexes on Golgi/endosomal membranes; HACD3/PTPLAD1 together with ATIC and PRKAA2/AMPK2 is proposed to be part of a signaling network regulating INSR autophosphorylation and endocytosis.

It is found in the endoplasmic reticulum membrane. It catalyses the reaction a very-long-chain (3R)-3-hydroxyacyl-CoA = a very-long-chain (2E)-enoyl-CoA + H2O. The enzyme catalyses (3R)-hydroxyhexadecanoyl-CoA = (2E)-hexadecenoyl-CoA + H2O. Its pathway is lipid metabolism; fatty acid biosynthesis. Functionally, catalyzes the third of the four reactions of the long-chain fatty acids elongation cycle. This endoplasmic reticulum-bound enzymatic process, allows the addition of two carbons to the chain of long- and very long-chain fatty acids/VLCFAs per cycle. This enzyme catalyzes the dehydration of the 3-hydroxyacyl-CoA intermediate into trans-2,3-enoyl-CoA, within each cycle of fatty acid elongation. Thereby, it participates in the production of VLCFAs of different chain lengths that are involved in multiple biological processes as precursors of membrane lipids and lipid mediators. Involved in Rac1-signaling pathways leading to the modulation of gene expression. Promotes insulin receptor/INSR autophosphorylation and is involved in INSR internalization. The polypeptide is Very-long-chain (3R)-3-hydroxyacyl-CoA dehydratase 3 (Bos taurus (Bovine)).